Reading from the N-terminus, the 346-residue chain is tRNA N6-adenosine threonylcarbamoyltransferase (346 aa).

Residues H117 and H121 each coordinate Fe cation. Residues 139–143 (VVSGG), D172, G185, D189, and N278 contribute to the substrate site. D307 is a binding site for Fe cation.

Belongs to the KAE1 / TsaD family. As to quaternary structure, may form a heterodimer with TsaB. It depends on Fe(2+) as a cofactor.

The protein resides in the cytoplasm. The catalysed reaction is L-threonylcarbamoyladenylate + adenosine(37) in tRNA = N(6)-L-threonylcarbamoyladenosine(37) in tRNA + AMP + H(+). Functionally, required for the formation of a threonylcarbamoyl group on adenosine at position 37 (t(6)A37) in tRNAs that read codons beginning with adenine. Is involved in the transfer of the threonylcarbamoyl moiety of threonylcarbamoyl-AMP (TC-AMP) to the N6 group of A37, together with TsaE and TsaB; this reaction does not require ATP in vitro. TsaD likely plays a direct catalytic role in this reaction. This Bacillus subtilis (strain 168) protein is tRNA N6-adenosine threonylcarbamoyltransferase.